Here is a 410-residue protein sequence, read N- to C-terminus: LL-diaminopimelate aminotransferase (410 aa).

Substrate is bound by residues tyrosine 15 and glycine 42. Pyridoxal 5'-phosphate is bound by residues tyrosine 72, 108–109 (SK), tyrosine 132, asparagine 187, tyrosine 218, and 246–248 (SFS). Substrate contacts are provided by lysine 109, tyrosine 132, and asparagine 187. Lysine 249 carries the N6-(pyridoxal phosphate)lysine modification. Residues arginine 257 and asparagine 292 each coordinate pyridoxal 5'-phosphate. Residues asparagine 292 and arginine 388 each contribute to the substrate site.

It belongs to the class-I pyridoxal-phosphate-dependent aminotransferase family. LL-diaminopimelate aminotransferase subfamily. In terms of assembly, homodimer. The cofactor is pyridoxal 5'-phosphate.

The enzyme catalyses (2S,6S)-2,6-diaminopimelate + 2-oxoglutarate = (S)-2,3,4,5-tetrahydrodipicolinate + L-glutamate + H2O + H(+). It participates in amino-acid biosynthesis; L-lysine biosynthesis via DAP pathway; LL-2,6-diaminopimelate from (S)-tetrahydrodipicolinate (aminotransferase route): step 1/1. Its function is as follows. Involved in the synthesis of meso-diaminopimelate (m-DAP or DL-DAP), required for both lysine and peptidoglycan biosynthesis. Catalyzes the direct conversion of tetrahydrodipicolinate to LL-diaminopimelate. This is LL-diaminopimelate aminotransferase from Geotalea daltonii (strain DSM 22248 / JCM 15807 / FRC-32) (Geobacter daltonii).